The chain runs to 887 residues: Phosphatidylinositol 3-kinase catalytic subunit type 3 (887 aa).

Residues Y35–Q184 form the C2 PI3K-type domain. Residues V149–D170 are disordered. Residues P156–D170 are compositionally biased toward polar residues. Position 163 is a phosphothreonine; by AMPK (T163). Position 165 is a phosphoserine; by AMPK (S165). A phosphoserine mark is found at S244, S261, and S282. The region spanning D283–V520 is the PIK helical domain. The segment at E416–D467 is disordered. Positions Q423–Q444 are enriched in low complexity. Positions P449–A459 are enriched in pro residues. A PI3K/PI4K catalytic domain is found at I605–F871. The tract at residues L611–M617 is G-loop. The tract at residues G740–N748 is catalytic loop. An activation loop region spans residues H759 to N780.

Belongs to the PI3/PI4-kinase family. Component of the PI3K (PI3KC3/PI3K-III/class III phosphatidylinositol 3-kinase) complex the core of which is composed of the catalytic subunit PIK3C3, the regulatory subunit PIK3R4 and BECN1 associating with additional regulatory/auxiliary subunits to form alternative complex forms. Alternative complex forms containing a fourth regulatory subunit in a mutually exclusive manner are: the PI3K complex I (PI3KC3-C1) containing ATG14, and the PI3K complex II (PI3KC3-C2) containing UVRAG. PI3KC3-C1 displays a V-shaped architecture with PIK3R4 serving as a bridge between PIK3C3 and the ATG14:BECN1 subcomplex. Both, PI3KC3-C1 and PI3KC3-C2, can associate with further regulatory subunits such as RUBCN, SH3GLB1/Bif-1 and AMBRA1. PI3KC3-C1 probably associates with PIK3CB. Interacts with RAB7A in the presence of PIK3R4. Interacts with AMBRA1. Interacts with BECN1P1/BECN2. Interacts with SLAMF1. May interact with DYN2. May be a component of a complex composed of RAB5A (in GDP-bound form), DYN2 and PIK3C3. Interacts with NCKAP1L. Interacts with ATG14; this interaction is increased in the absence of TMEM39A. Interacts with STEEP1; the interaction is STING1-dependent and required for trafficking of STING1 from the endoplasmic reticulum. Interacts with YWHAG. Interacts with ARMC3. The cofactor is Mn(2+). In terms of processing, ubiquitinated via 'Lys-29'- and 'Lys-48'-linked ubiquitination by UBE3C, promoting its degradation. Deubiquitination by ZRANB1/TRABID promotes its stabilization, leading to autophagosome maturation.

Its subcellular location is the midbody. The protein localises to the late endosome. It is found in the cytoplasmic vesicle. The protein resides in the autophagosome. The enzyme catalyses a 1,2-diacyl-sn-glycero-3-phospho-(1D-myo-inositol) + ATP = a 1,2-diacyl-sn-glycero-3-phospho-(1D-myo-inositol-3-phosphate) + ADP + H(+). Catalytic subunit of the PI3K complex that mediates formation of phosphatidylinositol 3-phosphate; different complex forms are believed to play a role in multiple membrane trafficking pathways: PI3KC3-C1 is involved in initiation of autophagosomes and PI3KC3-C2 in maturation of autophagosomes and endocytosis. As part of PI3KC3-C1, promotes endoplasmic reticulum membrane curvature formation prior to vesicle budding. Involved in regulation of degradative endocytic trafficking and required for the abscission step in cytokinesis, probably in the context of PI3KC3-C2. Involved in the transport of lysosomal enzyme precursors to lysosomes. Required for transport from early to late endosomes. The sequence is that of Phosphatidylinositol 3-kinase catalytic subunit type 3 from Rattus norvegicus (Rat).